The following is a 311-amino-acid chain: Ribosomal RNA small subunit methyltransferase H (311 aa).

S-adenosyl-L-methionine is bound by residues Ala-33 to His-35, Asp-53, Phe-80, Asp-101, and Gln-108.

It belongs to the methyltransferase superfamily. RsmH family.

It is found in the cytoplasm. It catalyses the reaction cytidine(1402) in 16S rRNA + S-adenosyl-L-methionine = N(4)-methylcytidine(1402) in 16S rRNA + S-adenosyl-L-homocysteine + H(+). Its function is as follows. Specifically methylates the N4 position of cytidine in position 1402 (C1402) of 16S rRNA. This Geobacter sulfurreducens (strain ATCC 51573 / DSM 12127 / PCA) protein is Ribosomal RNA small subunit methyltransferase H.